The chain runs to 152 residues: Xanthine-guanine phosphoribosyltransferase (152 aa).

5-phospho-alpha-D-ribose 1-diphosphate is bound by residues 37–38 (RG), arginine 69, and 88–96 (DDLVDTGGT). A GMP-binding site is contributed by arginine 69. A Mg(2+)-binding site is contributed by aspartate 89. Aspartate 92 and isoleucine 135 together coordinate guanine. Residues aspartate 92 and isoleucine 135 each coordinate xanthine. Residues 92 to 96 (DTGGT) and 134 to 135 (WI) each bind GMP.

It belongs to the purine/pyrimidine phosphoribosyltransferase family. XGPT subfamily. In terms of assembly, homotetramer. It depends on Mg(2+) as a cofactor.

The protein localises to the cell inner membrane. It catalyses the reaction GMP + diphosphate = guanine + 5-phospho-alpha-D-ribose 1-diphosphate. It carries out the reaction XMP + diphosphate = xanthine + 5-phospho-alpha-D-ribose 1-diphosphate. The catalysed reaction is IMP + diphosphate = hypoxanthine + 5-phospho-alpha-D-ribose 1-diphosphate. Its pathway is purine metabolism; GMP biosynthesis via salvage pathway; GMP from guanine: step 1/1. It functions in the pathway purine metabolism; XMP biosynthesis via salvage pathway; XMP from xanthine: step 1/1. Its function is as follows. Purine salvage pathway enzyme that catalyzes the transfer of the ribosyl-5-phosphate group from 5-phospho-alpha-D-ribose 1-diphosphate (PRPP) to the N9 position of the 6-oxopurines guanine and xanthine to form the corresponding ribonucleotides GMP (guanosine 5'-monophosphate) and XMP (xanthosine 5'-monophosphate), with the release of PPi. To a lesser extent, also acts on hypoxanthine. The sequence is that of Xanthine-guanine phosphoribosyltransferase from Escherichia coli (strain UTI89 / UPEC).